The sequence spans 458 residues: Enolase (458 aa).

Glutamine 177 is a binding site for (2R)-2-phosphoglycerate. Glutamate 219 serves as the catalytic Proton donor. Positions 256, 310, and 337 each coordinate Mg(2+). Residues lysine 362, arginine 391, serine 392, and lysine 413 each contribute to the (2R)-2-phosphoglycerate site. The Proton acceptor role is filled by lysine 362.

This sequence belongs to the enolase family. It depends on Mg(2+) as a cofactor.

It is found in the cytoplasm. Its subcellular location is the secreted. It localises to the cell surface. It carries out the reaction (2R)-2-phosphoglycerate = phosphoenolpyruvate + H2O. It functions in the pathway carbohydrate degradation; glycolysis; pyruvate from D-glyceraldehyde 3-phosphate: step 4/5. Functionally, catalyzes the reversible conversion of 2-phosphoglycerate (2-PG) into phosphoenolpyruvate (PEP). It is essential for the degradation of carbohydrates via glycolysis. The sequence is that of Enolase from Mycoplasma genitalium (strain ATCC 33530 / DSM 19775 / NCTC 10195 / G37) (Mycoplasmoides genitalium).